Reading from the N-terminus, the 426-residue chain is MSDAFVELLDEMIERLLNYKPGSRTLPNVIKLCQTLGLESFVDQVDSTKSRLSIASNIVVIDIDYENEMETILDVKLVLASNFDKFNYFNEKGENILLTSLSDVQDLKAFHHNLNFLVFLDSFSNIDIESGHTSLDLFKYYTDLPKMLQDYISDQHLPFTVKMNENSTFGVSIYDAQGQTKIMTVDLEKAPNSDRSFYEYVYDSKLKDWLNESSDASTQGINLVFKFEELVAFPETWLTTEIQMNETPKKFELPQQSHLKHTVKLQNELTSDLLLMDSFRISNEDIALLPDFLKWYNWHKIVLQEVLKLIIHDNVTSSISTSNSGSVQPKPRRKSSVLSNRRPSMTDSMMLRDSGIPEFTLKEILDQPVISDTEDDDQMDVDKEKQIPIVLNEEYIYIGKAQTCSYNDNDEQAWKAFIDYLKSKLI.

The interval 319-349 is disordered; it reads ISTSNSGSVQPKPRRKSSVLSNRRPSMTDSM. Residues 336-347 show a composition bias toward polar residues; sequence SVLSNRRPSMTD.

It belongs to the Mediator complex subunit 1 family. Component of the Mediator complex.

The protein resides in the nucleus. In terms of biological role, component of the Mediator complex, a coactivator involved in the regulated transcription of nearly all RNA polymerase II-dependent genes. Mediator functions as a bridge to convey information from gene-specific regulatory proteins to the basal RNA polymerase II transcription machinery. Mediator is recruited to promoters by direct interactions with regulatory proteins and serves as a scaffold for the assembly of a functional preinitiation complex with RNA polymerase II and the general transcription factors. The protein is Mediator of RNA polymerase II transcription subunit 1 (MED1) of Kluyveromyces lactis (strain ATCC 8585 / CBS 2359 / DSM 70799 / NBRC 1267 / NRRL Y-1140 / WM37) (Yeast).